Here is a 109-residue protein sequence, read N- to C-terminus: uncharacterized protein (109 aa).

The chain crosses the membrane as a helical span at residues 87-106 (WCSVGTAAAVGIFIGALLSM).

The protein belongs to the ElaB/YgaM/YqjD family. May bind to ribosomes.

It is found in the cell inner membrane. This is an uncharacterized protein from Escherichia coli O157:H7.